The following is a 296-amino-acid chain: tRNA-cytidine(32) 2-sulfurtransferase (296 aa).

Residues 72 to 77 (SGGKDS) carry the PP-loop motif motif. Cys147, Cys150, and Cys238 together coordinate [4Fe-4S] cluster.

The protein belongs to the TtcA family. As to quaternary structure, homodimer. It depends on Mg(2+) as a cofactor. The cofactor is [4Fe-4S] cluster.

The protein localises to the cytoplasm. It carries out the reaction cytidine(32) in tRNA + S-sulfanyl-L-cysteinyl-[cysteine desulfurase] + AH2 + ATP = 2-thiocytidine(32) in tRNA + L-cysteinyl-[cysteine desulfurase] + A + AMP + diphosphate + H(+). It participates in tRNA modification. Functionally, catalyzes the ATP-dependent 2-thiolation of cytidine in position 32 of tRNA, to form 2-thiocytidine (s(2)C32). The sulfur atoms are provided by the cysteine/cysteine desulfurase (IscS) system. The polypeptide is tRNA-cytidine(32) 2-sulfurtransferase (Sinorhizobium fredii (strain NBRC 101917 / NGR234)).